The primary structure comprises 618 residues: DNA mismatch repair protein MutL (618 aa).

Residues 367–402 (EPTTAREPATPRYSGGASGGNGGRQTAGGWPHAQPG) are disordered. The segment covering 382–392 (GASGGNGGRQT) has biased composition (gly residues).

It belongs to the DNA mismatch repair MutL/HexB family.

Its function is as follows. This protein is involved in the repair of mismatches in DNA. It is required for dam-dependent methyl-directed DNA mismatch repair. May act as a 'molecular matchmaker', a protein that promotes the formation of a stable complex between two or more DNA-binding proteins in an ATP-dependent manner without itself being part of a final effector complex. This chain is DNA mismatch repair protein MutL, found in Salmonella paratyphi A (strain ATCC 9150 / SARB42).